The sequence spans 81 residues: Cytotoxin 1d/1e (81 aa).

A signal peptide spans 1 to 21; it reads MKTLLLTLVVVTIVCLDLGYT. Disulfide bonds link Cys24/Cys42, Cys35/Cys59, Cys63/Cys74, and Cys75/Cys80.

The protein belongs to the three-finger toxin family. Short-chain subfamily. Type IA cytotoxin sub-subfamily. Monomer in solution; Homodimer and oligomer in the presence of negatively charged lipids forming a pore with a size ranging between 20 and 30 Angstroms. Expressed by the venom gland.

The protein resides in the secreted. It localises to the target cell membrane. Shows cytolytic activity on many different cells by forming pore in lipid membranes. In vivo, increases heart rate or kills the animal by cardiac arrest. In addition, it binds to heparin with high affinity, interacts with Kv channel-interacting protein 1 (KCNIP1) in a calcium-independent manner, and binds to integrin alpha-V/beta-3 (ITGAV/ITGB3) with moderate affinity. The polypeptide is Cytotoxin 1d/1e (Naja atra (Chinese cobra)).